The chain runs to 122 residues: Small ribosomal subunit protein uS13 (122 aa).

Positions 93–122 (RKGLPVRGQTTKNNARTRKGKRKTVGSASK) are disordered. The segment covering 107–116 (ARTRKGKRKT) has biased composition (basic residues).

This sequence belongs to the universal ribosomal protein uS13 family. Part of the 30S ribosomal subunit. Forms a loose heterodimer with protein S19. Forms two bridges to the 50S subunit in the 70S ribosome.

Located at the top of the head of the 30S subunit, it contacts several helices of the 16S rRNA. In the 70S ribosome it contacts the 23S rRNA (bridge B1a) and protein L5 of the 50S subunit (bridge B1b), connecting the 2 subunits; these bridges are implicated in subunit movement. Contacts the tRNAs in the A and P-sites. This is Small ribosomal subunit protein uS13 from Wolinella succinogenes (strain ATCC 29543 / DSM 1740 / CCUG 13145 / JCM 31913 / LMG 7466 / NCTC 11488 / FDC 602W) (Vibrio succinogenes).